We begin with the raw amino-acid sequence, 358 residues long: Fructose-bisphosphate aldolase 3, cytoplasmic (358 aa).

R39 contacts substrate. E183 serves as the catalytic Proton acceptor. The active-site Schiff-base intermediate with dihydroxyacetone-P is K225. Substrate contacts are provided by residues 266-268 and R298; that span reads SGG.

Belongs to the class I fructose-bisphosphate aldolase family. Homotetramer.

It localises to the cytoplasm. Its subcellular location is the cytosol. It catalyses the reaction beta-D-fructose 1,6-bisphosphate = D-glyceraldehyde 3-phosphate + dihydroxyacetone phosphate. It functions in the pathway carbohydrate degradation; glycolysis; D-glyceraldehyde 3-phosphate and glycerone phosphate from D-glucose: step 4/4. Functionally, fructose-bisphosphate aldolase that plays a key role in glycolysis and gluconeogenesis. The chain is Fructose-bisphosphate aldolase 3, cytoplasmic from Oryza sativa subsp. japonica (Rice).